The chain runs to 335 residues: DNA-directed RNA polymerase subunit alpha (335 aa).

Residues 1–233 (MVREKITVST…DLFIPFLHME (233 aa)) are alpha N-terminal domain (alpha-NTD). The interval 265–335 (KEIALKSIFI…KQLVIFLPKK (71 aa)) is alpha C-terminal domain (alpha-CTD).

It belongs to the RNA polymerase alpha chain family. In plastids the minimal PEP RNA polymerase catalytic core is composed of four subunits: alpha, beta, beta', and beta''. When a (nuclear-encoded) sigma factor is associated with the core the holoenzyme is formed, which can initiate transcription.

It is found in the plastid. Its subcellular location is the chloroplast. It catalyses the reaction RNA(n) + a ribonucleoside 5'-triphosphate = RNA(n+1) + diphosphate. DNA-dependent RNA polymerase catalyzes the transcription of DNA into RNA using the four ribonucleoside triphosphates as substrates. The chain is DNA-directed RNA polymerase subunit alpha from Coffea arabica (Arabian coffee).